The primary structure comprises 256 residues: Trans-aconitate 2-methyltransferase (256 aa).

It belongs to the methyltransferase superfamily. Tam family.

Its subcellular location is the cytoplasm. It catalyses the reaction trans-aconitate + S-adenosyl-L-methionine = (E)-3-(methoxycarbonyl)pent-2-enedioate + S-adenosyl-L-homocysteine. Its function is as follows. Catalyzes the S-adenosylmethionine monomethyl esterification of trans-aconitate. This chain is Trans-aconitate 2-methyltransferase, found in Rhodopseudomonas palustris (strain BisB18).